A 206-amino-acid polypeptide reads, in one-letter code: Small ribosomal subunit protein uS4 (206 aa).

One can recognise an S4 RNA-binding domain in the interval 96–156 (TRLDNVVYRM…EKSRTQARIK (61 aa)).

It belongs to the universal ribosomal protein uS4 family. Part of the 30S ribosomal subunit. Contacts protein S5. The interaction surface between S4 and S5 is involved in control of translational fidelity.

Functionally, one of the primary rRNA binding proteins, it binds directly to 16S rRNA where it nucleates assembly of the body of the 30S subunit. Its function is as follows. With S5 and S12 plays an important role in translational accuracy. The protein is Small ribosomal subunit protein uS4 of Shewanella halifaxensis (strain HAW-EB4).